Here is a 457-residue protein sequence, read N- to C-terminus: Aromatic amino acid permease FywP (457 aa).

The next 12 membrane-spanning stretches (helical) occupy residues 16–36 (IVMLSLGGAIGSGLFLGSGKV), 43–63 (SVLLSYVLAGLTLYVVMYGVG), 91–111 (FADWVYWATWMAVLIAEEAGV), 114–134 (FLAILIPGVPLWVFALVVAVL), 154–174 (AFIKVAVILLLIALGIYLLVI), 205–225 (GFLTSLLVVIFSFGGSELAAI), 243–263 (GVLIRIISFYVIPIFLFLHLL), 292–312 (IVLVIIVIAIFSAVNSAIYAT), 342–362 (NAILVSSFVLFIGVLLSAVLG), 373–393 (ISFTISIVWILLLVAALVLYF), 403–423 (VKLATLVVLIALSLVFIMQII), and 424–444 (TNPWTLSVFALVICLLSYFSY).

This sequence belongs to the amino acid-polyamine-organocation (APC) superfamily. Amino acid transporter (AAT) (TC 2.A.3.1) family.

Its subcellular location is the cell membrane. Functionally, involved in phenylalanine and tyrosine uptake. Also has affinity for tryptophan. Plays no significant role in the excretion of accumulated phenylalanine. The sequence is that of Aromatic amino acid permease FywP from Lactococcus lactis subsp. cremoris (strain MG1363).